Here is a 248-residue protein sequence, read N- to C-terminus: 3-deoxy-manno-octulosonate cytidylyltransferase (248 aa).

The protein belongs to the KdsB family.

The protein localises to the cytoplasm. It carries out the reaction 3-deoxy-alpha-D-manno-oct-2-ulosonate + CTP = CMP-3-deoxy-beta-D-manno-octulosonate + diphosphate. It functions in the pathway nucleotide-sugar biosynthesis; CMP-3-deoxy-D-manno-octulosonate biosynthesis; CMP-3-deoxy-D-manno-octulosonate from 3-deoxy-D-manno-octulosonate and CTP: step 1/1. It participates in bacterial outer membrane biogenesis; lipopolysaccharide biosynthesis. Its function is as follows. Activates KDO (a required 8-carbon sugar) for incorporation into bacterial lipopolysaccharide in Gram-negative bacteria. The chain is 3-deoxy-manno-octulosonate cytidylyltransferase from Christiangramia forsetii (strain DSM 17595 / CGMCC 1.15422 / KT0803) (Gramella forsetii).